We begin with the raw amino-acid sequence, 357 residues long: Histidine biosynthesis bifunctional protein HisB (357 aa).

Residues 1–168 (MTPILFIDRD…GIAHALADAP (168 aa)) form a histidinol-phosphatase region. Asp-8 serves as the catalytic Nucleophile. Residues Asp-8, Asp-10, and Asp-128 each coordinate Mg(2+). Asp-10 serves as the catalytic Proton donor. Residues 169–357 (RIAVVQRDTK…TALPTTKGAL (189 aa)) are imidazoleglycerol-phosphate dehydratase.

This sequence in the N-terminal section; belongs to the histidinol-phosphatase family. In the C-terminal section; belongs to the imidazoleglycerol-phosphate dehydratase family. It depends on Mg(2+) as a cofactor.

The protein resides in the cytoplasm. The enzyme catalyses D-erythro-1-(imidazol-4-yl)glycerol 3-phosphate = 3-(imidazol-4-yl)-2-oxopropyl phosphate + H2O. It carries out the reaction L-histidinol phosphate + H2O = L-histidinol + phosphate. The protein operates within amino-acid biosynthesis; L-histidine biosynthesis; L-histidine from 5-phospho-alpha-D-ribose 1-diphosphate: step 6/9. Its pathway is amino-acid biosynthesis; L-histidine biosynthesis; L-histidine from 5-phospho-alpha-D-ribose 1-diphosphate: step 8/9. This Stenotrophomonas maltophilia (strain R551-3) protein is Histidine biosynthesis bifunctional protein HisB.